Here is a 100-residue protein sequence, read N- to C-terminus: Aspartyl/glutamyl-tRNA(Asn/Gln) amidotransferase subunit C (100 aa).

Belongs to the GatC family. As to quaternary structure, heterotrimer of A, B and C subunits.

It catalyses the reaction L-glutamyl-tRNA(Gln) + L-glutamine + ATP + H2O = L-glutaminyl-tRNA(Gln) + L-glutamate + ADP + phosphate + H(+). It carries out the reaction L-aspartyl-tRNA(Asn) + L-glutamine + ATP + H2O = L-asparaginyl-tRNA(Asn) + L-glutamate + ADP + phosphate + 2 H(+). In terms of biological role, allows the formation of correctly charged Asn-tRNA(Asn) or Gln-tRNA(Gln) through the transamidation of misacylated Asp-tRNA(Asn) or Glu-tRNA(Gln) in organisms which lack either or both of asparaginyl-tRNA or glutaminyl-tRNA synthetases. The reaction takes place in the presence of glutamine and ATP through an activated phospho-Asp-tRNA(Asn) or phospho-Glu-tRNA(Gln). In Streptococcus equi subsp. zooepidemicus (strain H70), this protein is Aspartyl/glutamyl-tRNA(Asn/Gln) amidotransferase subunit C.